The primary structure comprises 283 residues: 4-diphosphocytidyl-2-C-methyl-D-erythritol kinase (283 aa).

K10 is an active-site residue. Position 99-109 (99-109 (PMGGGLGGGSS)) interacts with ATP. D141 is a catalytic residue.

The protein belongs to the GHMP kinase family. IspE subfamily. As to quaternary structure, homodimer.

It catalyses the reaction 4-CDP-2-C-methyl-D-erythritol + ATP = 4-CDP-2-C-methyl-D-erythritol 2-phosphate + ADP + H(+). It participates in isoprenoid biosynthesis; isopentenyl diphosphate biosynthesis via DXP pathway; isopentenyl diphosphate from 1-deoxy-D-xylulose 5-phosphate: step 3/6. Catalyzes the phosphorylation of the position 2 hydroxy group of 4-diphosphocytidyl-2C-methyl-D-erythritol. This chain is 4-diphosphocytidyl-2-C-methyl-D-erythritol kinase, found in Salmonella typhi.